The chain runs to 412 residues: DnaJ homolog subfamily A member 2 (412 aa).

In terms of domain architecture, J spans 8-70 (KLYDILGVPP…EKRELYDRYG (63 aa)). N6-acetyllysine is present on Lys39. A phosphoserine mark is found at Ser78 and Ser123. A CR-type zinc finger spans residues 130 to 214 (GKTTKLQLSK…CEGKKVIKEV (85 aa)). Lys134 participates in a covalent cross-link: Glycyl lysine isopeptide (Lys-Gly) (interchain with G-Cter in SUMO2). Positions 143 and 146 each coordinate Zn(2+). One copy of the CXXCXGXG motif repeat lies at 143–150 (CSACSGQG). N6-acetyllysine is present on Lys152. 6 residues coordinate Zn(2+): Cys159, Cys162, Cys186, Cys189, Cys202, and Cys205. 3 CXXCXGXG motif repeats span residues 159–166 (CSACRGRG), 186–193 (CSDCNGEG), and 202–209 (CKKCEGKK). The segment at 359–412 (PEVPNIIGDTEEVELQEFDSTRGSGGGQRREAYNDSSDEESSSHHGPGVQCAHQ) is disordered. Tyr391 carries the post-translational modification Phosphotyrosine. A phosphoserine mark is found at Ser394 and Ser395. A Cysteine methyl ester modification is found at Cys409. Cys409 carries the S-farnesyl cysteine lipid modification. Residues 410-412 (AHQ) constitute a propeptide, removed in mature form.

It localises to the membrane. Its function is as follows. Co-chaperone of Hsc70. Stimulates ATP hydrolysis and the folding of unfolded proteins mediated by HSPA1A/B (in vitro). The protein is DnaJ homolog subfamily A member 2 (DNAJA2) of Bos taurus (Bovine).